Consider the following 406-residue polypeptide: Arginine biosynthesis bifunctional protein ArgJ (406 aa).

Residues T152, K179, T190, E277, N401, and S406 each contribute to the substrate site. Residue T190 is the Nucleophile of the active site.

It belongs to the ArgJ family. Heterotetramer of two alpha and two beta chains.

The protein resides in the cytoplasm. The enzyme catalyses N(2)-acetyl-L-ornithine + L-glutamate = N-acetyl-L-glutamate + L-ornithine. It carries out the reaction L-glutamate + acetyl-CoA = N-acetyl-L-glutamate + CoA + H(+). It participates in amino-acid biosynthesis; L-arginine biosynthesis; L-ornithine and N-acetyl-L-glutamate from L-glutamate and N(2)-acetyl-L-ornithine (cyclic): step 1/1. It functions in the pathway amino-acid biosynthesis; L-arginine biosynthesis; N(2)-acetyl-L-ornithine from L-glutamate: step 1/4. In terms of biological role, catalyzes two activities which are involved in the cyclic version of arginine biosynthesis: the synthesis of N-acetylglutamate from glutamate and acetyl-CoA as the acetyl donor, and of ornithine by transacetylation between N(2)-acetylornithine and glutamate. This is Arginine biosynthesis bifunctional protein ArgJ from Neisseria meningitidis serogroup A / serotype 4A (strain DSM 15465 / Z2491).